A 368-amino-acid polypeptide reads, in one-letter code: MRGAMLNPIVIAAGGTGGHMVPAESVADELMRRGQRIVLMTDARSAGQKSAVFAGCERHVLAGAGLAGRSLGRRLLGVAQLARGTVAARHILAKLDAAAVVGFGGYPSVPPVLAAATLRRRPAIVLHDQNAVLGGANRFLARFADHLALSFEGTVGLPGRARATVTGNPVRAAISVLAASPYEPPAETIRLLVLGGSLGARIFATLVPEALARLPEGLRRRIALTMQCPGEAIGAARGALDAAGITHELAPFFSDVAPRMAAAHLLVARSGGSTVAEVATIGRPAIFIPLAINTDQRHNADVLARRGGAFRLDQATTTPDRLAGVLESLLDDPLRLAAMAEAAASARIEEAAARLADLVLSAIAERVR.

Residues 16–18, Asn-130, Arg-171, Ser-197, and Gln-296 each bind UDP-N-acetyl-alpha-D-glucosamine; that span reads TGG.

It belongs to the glycosyltransferase 28 family. MurG subfamily.

It localises to the cell inner membrane. The catalysed reaction is di-trans,octa-cis-undecaprenyl diphospho-N-acetyl-alpha-D-muramoyl-L-alanyl-D-glutamyl-meso-2,6-diaminopimeloyl-D-alanyl-D-alanine + UDP-N-acetyl-alpha-D-glucosamine = di-trans,octa-cis-undecaprenyl diphospho-[N-acetyl-alpha-D-glucosaminyl-(1-&gt;4)]-N-acetyl-alpha-D-muramoyl-L-alanyl-D-glutamyl-meso-2,6-diaminopimeloyl-D-alanyl-D-alanine + UDP + H(+). The protein operates within cell wall biogenesis; peptidoglycan biosynthesis. Cell wall formation. Catalyzes the transfer of a GlcNAc subunit on undecaprenyl-pyrophosphoryl-MurNAc-pentapeptide (lipid intermediate I) to form undecaprenyl-pyrophosphoryl-MurNAc-(pentapeptide)GlcNAc (lipid intermediate II). This Acidiphilium cryptum (strain JF-5) protein is UDP-N-acetylglucosamine--N-acetylmuramyl-(pentapeptide) pyrophosphoryl-undecaprenol N-acetylglucosamine transferase.